The chain runs to 389 residues: Chalcone synthase J (389 aa).

Residue Cys164 is part of the active site.

Belongs to the thiolase-like superfamily. Chalcone/stilbene synthases family.

The enzyme catalyses (E)-4-coumaroyl-CoA + 3 malonyl-CoA + 3 H(+) = 2',4,4',6'-tetrahydroxychalcone + 3 CO2 + 4 CoA. The protein operates within secondary metabolite biosynthesis; flavonoid biosynthesis. Functionally, the primary product of this enzyme is 4,2',4',6'-tetrahydroxychalcone (also termed naringenin-chalcone or chalcone) which can under specific conditions spontaneously isomerize into naringenin. This Petunia hybrida (Petunia) protein is Chalcone synthase J (CHSJ).